We begin with the raw amino-acid sequence, 218 residues long: MEFPLDPLLTPIEARVLGALMEKQLTTPDAYPLTLNSLLLACNQKTSREPVSHYESGEVQRCINELQERKLVEVDWGARAARYDQRLTRVVSLDKAAQALLCVMMLRGPQTLSELLTRTQRMFDFGSTQAIEEKLQHLCVKTHPAFMHIPRLAGQREDRYMHLLSGAPDLEALAAQTHNRSERNDDGRTQLEERVTLLENQLAELQAQVARLLEKSAE.

This sequence belongs to the UPF0502 family.

This is UPF0502 protein CJA_1529 from Cellvibrio japonicus (strain Ueda107) (Pseudomonas fluorescens subsp. cellulosa).